Here is a 156-residue protein sequence, read N- to C-terminus: UPF0460 protein in nifX 3'region (156 aa).

This sequence belongs to the UPF0460 family.

The protein is UPF0460 protein in nifX 3'region of Rhodobacter capsulatus (Rhodopseudomonas capsulata).